Consider the following 430-residue polypeptide: MNRIIKKAKTLKGEITPPPDKSISHRAVMFASLAKGQSRIKNFLWAKDPLSSLNAMKSLGVEITITDSKEIIVNGKGLHSLKESDNVIDCGNSGTTIRLLSGIVAGQRFLTVLTGDDSLRYRPMKRIINPLSLMGANIMGRAENKFPPIVIKGGFLKGISYEMPIASAQVKSAILLAGLYAKGETTLTEPHKSRDHTEKMLKNMGVNIIINDNTVKLSPVDHELNCFDITIPNDFSSAAFFIAGACLVPDSEILIKQVNLNETRTGFIEVLKNMGATIEIFNITEQGGEPVGDIFAKSSSELKGINVQGDIIPKLIDEFPILCVVATQAEGKTVIKDAKDLRAKESDRIKAMTSELKKMGVKIKEFEDGVEIEGPCKLIGTEVYSYKDHRIAMALSIAGVIAEGETTIKDANCVDISFPEFYSLLEMLQK.

Lysine 21, serine 22, and arginine 26 together coordinate 3-phosphoshikimate. Lysine 21 contributes to the phosphoenolpyruvate binding site. Residues glycine 94 and arginine 122 each contribute to the phosphoenolpyruvate site. Serine 167, glutamine 169, aspartate 317, and lysine 344 together coordinate 3-phosphoshikimate. Residue glutamine 169 coordinates phosphoenolpyruvate. The active-site Proton acceptor is the aspartate 317. Residues arginine 348 and arginine 390 each contribute to the phosphoenolpyruvate site.

Belongs to the EPSP synthase family. Monomer.

The protein localises to the cytoplasm. It catalyses the reaction 3-phosphoshikimate + phosphoenolpyruvate = 5-O-(1-carboxyvinyl)-3-phosphoshikimate + phosphate. It functions in the pathway metabolic intermediate biosynthesis; chorismate biosynthesis; chorismate from D-erythrose 4-phosphate and phosphoenolpyruvate: step 6/7. Its function is as follows. Catalyzes the transfer of the enolpyruvyl moiety of phosphoenolpyruvate (PEP) to the 5-hydroxyl of shikimate-3-phosphate (S3P) to produce enolpyruvyl shikimate-3-phosphate and inorganic phosphate. The protein is 3-phosphoshikimate 1-carboxyvinyltransferase of Thermodesulfovibrio yellowstonii (strain ATCC 51303 / DSM 11347 / YP87).